Here is a 144-residue protein sequence, read N- to C-terminus: Large ribosomal subunit protein uL15 (144 aa).

Residues 1 to 49 are disordered; sequence MRLNTLSPAAGAKSAAKRVGRGIGSGLGKTAGRGHKGQKSRSGGGVRVG. Positions 21 to 31 are enriched in gly residues; sequence RGIGSGLGKTA.

It belongs to the universal ribosomal protein uL15 family. Part of the 50S ribosomal subunit.

In terms of biological role, binds to the 23S rRNA. The sequence is that of Large ribosomal subunit protein uL15 from Shewanella piezotolerans (strain WP3 / JCM 13877).